Reading from the N-terminus, the 88-residue chain is Large ribosomal subunit protein bL27 (88 aa).

The interval 1 to 21 (MAHKKGASSSRNGRDSAAQRL) is disordered.

This sequence belongs to the bacterial ribosomal protein bL27 family.

The polypeptide is Large ribosomal subunit protein bL27 (Mycobacterium sp. (strain MCS)).